Here is a 508-residue protein sequence, read N- to C-terminus: MILGPYIAVSPLIVISLGGALLMLAEAFSHRREESHDRRSGPSSDMALGTAITLLAGAVFSGAVGFVGPETLEGFDSLAPYLVMDRFTLFFSFVLCLGGALAALLAGGYLPEHRLDRGEFYPLLTFSTVGAIILAGAGDLLTLFLGLETMSLGAYALTGFRRTSPRSTEAAIKYFLLGSFAAALLLYGGALIYGATGHTDLAGIGEAIAGAKGAAAPNPALLLIGAALVLVGLAFKVSAVPFHMWTPDAYEGAPTPATTFMAVAVKGAAFATLLRVLLGAFGSPALSSWAAGWPPAVAVMALLTMTVANLIAGRQESVKRMLAYSSIAHAGYLLVGVAATVRASEDAQASVMFYLLAYTVSTVGAFGTLILCGSRGAEAVSYEDLSGIGKRHPVAALAFSLFLLSLAGVPPTAGFFGKLYIVKAAMGAELYTLSVALLLNSVLSAYYYLRVLVYMYMREPAPGAPIARPMRSGYVNAALVVSAVLVMVLGIWPTTSLGIAVRAVLASR.

13 helical membrane-spanning segments follow: residues 2–22 (ILGPYIAVSPLIVISLGGALL), 47–67 (ALGTAITLLAGAVFSGAVGFV), 87–107 (FTLFFSFVLCLGGALAALLAG), 126–146 (FSTVGAIILAGAGDLLTLFLG), 175–195 (FLLGSFAAALLLYGGALIYGA), 220–240 (ALLLIGAALVLVGLAFKVSAV), 260–280 (FMAVAVKGAAFATLLRVLLGA), 291–311 (AGWPPAVAVMALLTMTVANLI), 321–341 (MLAYSSIAHAGYLLVGVAATV), 351–371 (VMFYLLAYTVSTVGAFGTLIL), 396–416 (ALAFSLFLLSLAGVPPTAGFF), 431–453 (YTLSVALLLNSVLSAYYYLRVLV), and 479–499 (LVVSAVLVMVLGIWPTTSLGI).

It belongs to the complex I subunit 2 family. In terms of assembly, NDH-1 is composed of 14 different subunits. Subunits NuoA, H, J, K, L, M, N constitute the membrane sector of the complex.

The protein resides in the cell inner membrane. The catalysed reaction is a quinone + NADH + 5 H(+)(in) = a quinol + NAD(+) + 4 H(+)(out). Its function is as follows. NDH-1 shuttles electrons from NADH, via FMN and iron-sulfur (Fe-S) centers, to quinones in the respiratory chain. The immediate electron acceptor for the enzyme in this species is believed to be ubiquinone. Couples the redox reaction to proton translocation (for every two electrons transferred, four hydrogen ions are translocated across the cytoplasmic membrane), and thus conserves the redox energy in a proton gradient. This chain is NADH-quinone oxidoreductase subunit N 1, found in Sorangium cellulosum (strain So ce56) (Polyangium cellulosum (strain So ce56)).